The sequence spans 96 residues: MNLRPLHDRVIVKRVENETKTASGIVIPDSAAEKPDQGEVLAVGPGKKNDKGELGAMAVKVGDRVLFGKYSGQTVKVDGDELLVMKEEDLFAVVEK.

The protein belongs to the GroES chaperonin family. As to quaternary structure, heptamer of 7 subunits arranged in a ring. Interacts with the chaperonin GroEL.

It is found in the cytoplasm. In terms of biological role, together with the chaperonin GroEL, plays an essential role in assisting protein folding. The GroEL-GroES system forms a nano-cage that allows encapsulation of the non-native substrate proteins and provides a physical environment optimized to promote and accelerate protein folding. GroES binds to the apical surface of the GroEL ring, thereby capping the opening of the GroEL channel. This Polaromonas naphthalenivorans (strain CJ2) protein is Co-chaperonin GroES.